An 81-amino-acid chain; its full sequence is N.vectensis toxin 4 (81 aa).

The signal sequence occupies residues 1–20 (MRSSWMFVICFAMLILYTNG). 3 disulfide bridges follow: Cys-46–Cys-75, Cys-48–Cys-70, and Cys-63–Cys-76.

Expressed in ectodermal gland cells. In adult female tissues, highly transcribed in mesenteries (gametes-producing tissue) and slightly transcribed in tentacles, pharynx and physa.

Functionally, has toxic effects on zebrafish larvae. It causes contractile paralysis and twitching of the tail within 30 minutes, followed by death within 40 minutes. Does not show any toxicity when injected into arthropods (cherry shrimps or grass shrimps). This chain is N.vectensis toxin 4, found in Nematostella vectensis (Starlet sea anemone).